A 352-amino-acid polypeptide reads, in one-letter code: Alanine racemase (352 aa).

The active-site Proton acceptor; specific for D-alanine is the K33. K33 carries the post-translational modification N6-(pyridoxal phosphate)lysine. Residue R129 coordinates substrate. Residue Y250 is the Proton acceptor; specific for L-alanine of the active site. Residue M298 coordinates substrate.

It belongs to the alanine racemase family. Pyridoxal 5'-phosphate is required as a cofactor.

It carries out the reaction L-alanine = D-alanine. It functions in the pathway amino-acid biosynthesis; D-alanine biosynthesis; D-alanine from L-alanine: step 1/1. Functionally, catalyzes the interconversion of L-alanine and D-alanine. May also act on other amino acids. This is Alanine racemase (alr) from Neisseria gonorrhoeae (strain ATCC 700825 / FA 1090).